Consider the following 306-residue polypeptide: tRNA N6-adenosine threonylcarbamoyltransferase (306 aa).

His-110 and His-114 together coordinate Fe cation. Substrate contacts are provided by residues Ile-132–Lys-136, Asp-165, Gly-178, Asp-182, and Asn-268. Residue Asp-292 coordinates Fe cation.

Belongs to the KAE1 / TsaD family. Fe(2+) serves as cofactor.

It localises to the cytoplasm. The enzyme catalyses L-threonylcarbamoyladenylate + adenosine(37) in tRNA = N(6)-L-threonylcarbamoyladenosine(37) in tRNA + AMP + H(+). Functionally, required for the formation of a threonylcarbamoyl group on adenosine at position 37 (t(6)A37) in tRNAs that read codons beginning with adenine. Is involved in the transfer of the threonylcarbamoyl moiety of threonylcarbamoyl-AMP (TC-AMP) to the N6 group of A37, together with TsaE and TsaB. TsaD likely plays a direct catalytic role in this reaction. This chain is tRNA N6-adenosine threonylcarbamoyltransferase, found in Malacoplasma penetrans (strain HF-2) (Mycoplasma penetrans).